Here is a 23-residue protein sequence, read N- to C-terminus: Conotoxin as25a (23 aa).

P4 carries the post-translational modification 4-hydroxyproline; partial. Position 23 is a 4-hydroxyproline; partial; alternate (P23). P23 carries the proline amide; alternate modification.

In terms of processing, the name as25b given in PubMed:23474143 corresponds to the hydroxylated peptide. The amidation of the C-terminus of this hydroxylated peptide is not directly confirmed. Contains 3 disulfide bonds. As to expression, expressed by the venom duct.

It is found in the secreted. Upon intracranial injection in mice, as25a (the toxin without the two 4-hydroxyprolines) provokes paralysis of the hind limbs and death with a dose of 240 pmol. In Conus cancellatus (Cancellate cone), this protein is Conotoxin as25a.